Consider the following 337-residue polypeptide: Ornithine carbamoyltransferase, catabolic (337 aa).

Residues 57–60 (STRT), Gln-84, Arg-108, and 135–138 (HPTQ) contribute to the carbamoyl phosphate site. L-ornithine contacts are provided by residues Asn-167, Asp-231, and 235-236 (SM). Carbamoyl phosphate-binding positions include 272 to 273 (CL) and Arg-317.

This sequence belongs to the aspartate/ornithine carbamoyltransferase superfamily. OTCase family.

It localises to the cytoplasm. The catalysed reaction is carbamoyl phosphate + L-ornithine = L-citrulline + phosphate + H(+). Its pathway is amino-acid degradation; L-arginine degradation via ADI pathway; carbamoyl phosphate from L-arginine: step 2/2. Reversibly catalyzes the transfer of the carbamoyl group from carbamoyl phosphate (CP) to the N(epsilon) atom of ornithine (ORN) to produce L-citrulline. In Streptococcus suis (strain 89/1591), this protein is Ornithine carbamoyltransferase, catabolic.